The sequence spans 401 residues: MRRRLRLRREALLTLLLGATLGLLLYAQQEGAAPTTSAPRAQGRAAPGPTPGLRVFQAPDTGAAPPAYEGDTPEPPTPTGPFDFGRYLRAKDQRRFPLLINQPHKCQGNGAFPRGPDLLIAVKSVAADFERRQAVRQTWGAEGRVQGALVRRVFLLGVPRGTGTVAGEAEAGTQTHWSALLRAESRAYADILLWAFDDTFFNLTLKEIHFLAWASDYCPDVRFVFKGDADVFVHVGNLLEFLAPRDPAQDLLAGDVIVQARPIRVRASKYYIPEAVYGLPAYPAYAGGGGFVLSGATLRRLAGACAQVELFPIDDVFLGMCLQRLRLTPEPHPAFRTFGIPRPSAAPHLHTFDPCFYRELVVVHGLSAADIWLMWHLLHGPNGPACARPWPVPAGPFQWGP.

The Cytoplasmic portion of the chain corresponds to 1 to 10 (MRRRLRLRRE). A helical; Signal-anchor for type II membrane protein transmembrane segment spans residues 11-31 (ALLTLLLGATLGLLLYAQQEG). Residues 32 to 401 (AAPTTSAPRA…VPAGPFQWGP (370 aa)) lie on the Lumenal side of the membrane. The segment at 33 to 85 (APTTSAPRAQGRAAPGPTPGLRVFQAPDTGAAPPAYEGDTPEPPTPTGPFDFG) is disordered. A compositionally biased stretch (low complexity) spans 38–47 (APRAQGRAAP).

Belongs to the glycosyltransferase 31 family.

It localises to the golgi apparatus membrane. The polypeptide is UDP-GlcNAc:betaGal beta-1,3-N-acetylglucosaminyltransferase 9 (Bos taurus (Bovine)).